Here is a 121-residue protein sequence, read N- to C-terminus: Prefoldin subunit beta (121 aa).

The protein belongs to the prefoldin subunit beta family. As to quaternary structure, heterohexamer of two alpha and four beta subunits.

The protein localises to the cytoplasm. Molecular chaperone capable of stabilizing a range of proteins. Seems to fulfill an ATP-independent, HSP70-like function in archaeal de novo protein folding. This is Prefoldin subunit beta from Methanoculleus marisnigri (strain ATCC 35101 / DSM 1498 / JR1).